The primary structure comprises 381 residues: Heme A synthase (381 aa).

The segment at 1–23 (MARRPVFQEVTETTPPGTTPSGG) is disordered. A compositionally biased stretch (low complexity) spans 11–23 (TETTPPGTTPSGG). The next 8 membrane-spanning stretches (helical) occupy residues 34–54 (GAIRLWLVVLFVMVAAMIALG), 120–140 (RLLGRLVGLVWAAGFVFFLAT), 151–171 (LLLLGALGGAQGAIGWWMVHS), 185–205 (LATHLGLAFAILGLIAWYVLA), 228–248 (TTGLMHLAFVQILLGALVAGI), 285–305 (LVQFIHRMTGYLLAVFAVVVF), 319–339 (AYVAMLVALAVQVALGIMNVL), and 342–362 (SPLPLALAHQIGAVALFTLIL). Position 290 (H290) interacts with heme. Residue H350 participates in heme binding.

Belongs to the COX15/CtaA family. Type 2 subfamily. As to quaternary structure, interacts with CtaB. Requires heme b as cofactor.

The protein localises to the cell membrane. The catalysed reaction is Fe(II)-heme o + 2 A + H2O = Fe(II)-heme a + 2 AH2. It participates in porphyrin-containing compound metabolism; heme A biosynthesis; heme A from heme O: step 1/1. Functionally, catalyzes the conversion of heme O to heme A by two successive hydroxylations of the methyl group at C8. The first hydroxylation forms heme I, the second hydroxylation results in an unstable dihydroxymethyl group, which spontaneously dehydrates, resulting in the formyl group of heme A. The chain is Heme A synthase from Paracoccus denitrificans (strain Pd 1222).